Consider the following 229-residue polypeptide: Uracil-DNA glycosylase (229 aa).

Aspartate 65 (proton acceptor) is an active-site residue.

It belongs to the uracil-DNA glycosylase (UDG) superfamily. UNG family.

Its subcellular location is the cytoplasm. The catalysed reaction is Hydrolyzes single-stranded DNA or mismatched double-stranded DNA and polynucleotides, releasing free uracil.. Functionally, excises uracil residues from the DNA which can arise as a result of misincorporation of dUMP residues by DNA polymerase or due to deamination of cytosine. This chain is Uracil-DNA glycosylase, found in Oceanobacillus iheyensis (strain DSM 14371 / CIP 107618 / JCM 11309 / KCTC 3954 / HTE831).